The sequence spans 368 residues: G-protein coupled receptor 183-A (368 aa).

Residues 1 to 27 (METTSANFTQNDSNVCTNLYNHRGWAQ) lie on the Extracellular side of the membrane. N-linked (GlcNAc...) asparagine glycans are attached at residues N7 and N11. Residues 28-53 (YFLPAMYSLICIVGLLGNVLALHVIW) traverse the membrane as a helical segment. The Cytoplasmic portion of the chain corresponds to 54 to 73 (PNLKKINSTTLYSANLVVSD). The helical transmembrane segment at 74–91 (ILFSLALPLRVVYYARGF) threads the bilayer. The Extracellular portion of the chain corresponds to 92 to 101 (DWPMGEGLCK). Cysteines 100 and 178 form a disulfide. A helical membrane pass occupies residues 102–123 (AVALLFYINMYAGVNFMTCLSV). The Cytoplasmic segment spans residues 124–145 (DRFIAVVLPLRFSRFRKVQKVR). Residues 146–164 (YICGVVWVVVLMQTLPLLS) traverse the membrane as a helical segment. Residues 165–189 (MPMTNIEQSGHITCMEYPNFEKIDN) are Extracellular-facing. A helical membrane pass occupies residues 190-212 (LPVMLIGAVVLGFGIPVITILVC). At 213-238 (YTALCLKLRHLAKSNKLTEKSGRSSK) the chain is on the cytoplasmic side. The helical transmembrane segment at 239–262 (AIGVICTVILVFVVCYSPYHVDLL) threads the bilayer. Topologically, residues 263 to 282 (QYMIKKLRYDPDCSELHKFQ) are extracellular. The chain crosses the membrane as a helical span at residues 283–307 (ISLHITVCFMNLNSCLDPFIYFFAC). The Cytoplasmic segment spans residues 308–368 (KGYKKKVLKL…SSVLLNSLEQ (61 aa)).

This sequence belongs to the G-protein coupled receptor 1 family.

The protein localises to the cell membrane. In terms of biological role, G-protein coupled receptor expressed in lymphocytes that acts as a chemotactic receptor for B-cells, T-cells, splenic dendritic cells, monocytes/macrophages and astrocytes. Receptor for oxysterol 7-alpha,25-dihydroxycholesterol (7-alpha,25-OHC) and other related oxysterols. Mediates cell positioning and movement of a number of cells by binding the 7-alpha,25-OHC ligand that forms a chemotactic gradient. Binding of 7-alpha,25-OHC mediates the correct localization of B-cells during humoral immune responses. In Danio rerio (Zebrafish), this protein is G-protein coupled receptor 183-A (gpr183a).